Here is a 116-residue protein sequence, read N- to C-terminus: Ribonuclease P protein component (116 aa).

This sequence belongs to the RnpA family. As to quaternary structure, consists of a catalytic RNA component (M1 or rnpB) and a protein subunit.

It catalyses the reaction Endonucleolytic cleavage of RNA, removing 5'-extranucleotides from tRNA precursor.. Its function is as follows. RNaseP catalyzes the removal of the 5'-leader sequence from pre-tRNA to produce the mature 5'-terminus. It can also cleave other RNA substrates such as 4.5S RNA. The protein component plays an auxiliary but essential role in vivo by binding to the 5'-leader sequence and broadening the substrate specificity of the ribozyme. The sequence is that of Ribonuclease P protein component from Exiguobacterium sibiricum (strain DSM 17290 / CCUG 55495 / CIP 109462 / JCM 13490 / 255-15).